We begin with the raw amino-acid sequence, 314 residues long: Glycerol-3-phosphate dehydrogenase [NAD(P)+] (314 aa).

NADPH contacts are provided by F11, R30, and K96. K96, G124, and S126 together coordinate sn-glycerol 3-phosphate. A128 contributes to the NADPH binding site. Residues K179, D232, S242, R243, and N244 each contribute to the sn-glycerol 3-phosphate site. The active-site Proton acceptor is the K179. R243 is a binding site for NADPH. NADPH is bound at residue E264.

Belongs to the NAD-dependent glycerol-3-phosphate dehydrogenase family.

It localises to the cytoplasm. The catalysed reaction is sn-glycerol 3-phosphate + NAD(+) = dihydroxyacetone phosphate + NADH + H(+). It carries out the reaction sn-glycerol 3-phosphate + NADP(+) = dihydroxyacetone phosphate + NADPH + H(+). The protein operates within membrane lipid metabolism; glycerophospholipid metabolism. Functionally, catalyzes the reduction of the glycolytic intermediate dihydroxyacetone phosphate (DHAP) to sn-glycerol 3-phosphate (G3P), the key precursor for phospholipid synthesis. This Paracoccus denitrificans (strain Pd 1222) protein is Glycerol-3-phosphate dehydrogenase [NAD(P)+].